Here is a 482-residue protein sequence, read N- to C-terminus: tRNA sulfurtransferase (482 aa).

Residues 61 to 165 (AAIVAELTRI…DERLILVTAR (105 aa)) enclose the THUMP domain. ATP is bound by residues 183–184 (LI), K265, G287, and Q296. Cysteines 344 and 456 form a disulfide. Positions 404-482 (FSHNDVILDI…GFKNVKVYRP (79 aa)) constitute a Rhodanese domain. The Cysteine persulfide intermediate role is filled by C456.

The protein belongs to the ThiI family.

Its subcellular location is the cytoplasm. It catalyses the reaction [ThiI sulfur-carrier protein]-S-sulfanyl-L-cysteine + a uridine in tRNA + 2 reduced [2Fe-2S]-[ferredoxin] + ATP + H(+) = [ThiI sulfur-carrier protein]-L-cysteine + a 4-thiouridine in tRNA + 2 oxidized [2Fe-2S]-[ferredoxin] + AMP + diphosphate. The enzyme catalyses [ThiS sulfur-carrier protein]-C-terminal Gly-Gly-AMP + S-sulfanyl-L-cysteinyl-[cysteine desulfurase] + AH2 = [ThiS sulfur-carrier protein]-C-terminal-Gly-aminoethanethioate + L-cysteinyl-[cysteine desulfurase] + A + AMP + 2 H(+). It functions in the pathway cofactor biosynthesis; thiamine diphosphate biosynthesis. Functionally, catalyzes the ATP-dependent transfer of a sulfur to tRNA to produce 4-thiouridine in position 8 of tRNAs, which functions as a near-UV photosensor. Also catalyzes the transfer of sulfur to the sulfur carrier protein ThiS, forming ThiS-thiocarboxylate. This is a step in the synthesis of thiazole, in the thiamine biosynthesis pathway. The sulfur is donated as persulfide by IscS. The polypeptide is tRNA sulfurtransferase (Erwinia tasmaniensis (strain DSM 17950 / CFBP 7177 / CIP 109463 / NCPPB 4357 / Et1/99)).